A 159-amino-acid polypeptide reads, in one-letter code: MSLPDGFYIRRMEEGDLEQVTETLKVLTTVGTITPESFSKLIKYWNEATVWNDNEDKKIMQYNPMVIVDKRTETVAATGNIIIERKIIHELGLCGHIEDIAVNSKYQGQGLGKLLIDQLVTIGFDYGCYKIILDCDEKNVKFYEKCGFSNAGVEMQIRK.

Ser2 is subject to N-acetylserine. Residues Thr28, 86 to 89 (KIIH), and 98 to 100 (EDI) contribute to the D-glucosamine 6-phosphate site. In terms of domain architecture, N-acetyltransferase spans 28 to 159 (TTVGTITPES…NAGVEMQIRK (132 aa)). Residues 100-102 (IAV) and 108-113 (GQGLGK) contribute to the acetyl-CoA site. Residues 129–130 (YK) and Asp134 contribute to the D-glucosamine 6-phosphate site. 143–145 (YEK) contacts acetyl-CoA. Arg158 serves as a coordination point for D-glucosamine 6-phosphate.

The protein belongs to the acetyltransferase family. GNA1 subfamily. In terms of assembly, homodimer.

It carries out the reaction D-glucosamine 6-phosphate + acetyl-CoA = N-acetyl-D-glucosamine 6-phosphate + CoA + H(+). The protein operates within nucleotide-sugar biosynthesis; UDP-N-acetyl-alpha-D-glucosamine biosynthesis; N-acetyl-alpha-D-glucosamine 1-phosphate from alpha-D-glucosamine 6-phosphate (route I): step 1/2. This is Glucosamine 6-phosphate N-acetyltransferase (GNA1) from Saccharomyces cerevisiae (strain ATCC 204508 / S288c) (Baker's yeast).